A 221-amino-acid polypeptide reads, in one-letter code: Fanconi anemia core complex-associated protein 24 (221 aa).

Belongs to the multisubunit FA complex composed of FANCA, FANCB, FANCC, FANCE, FANCF, FANCG, FANCL/PHF9, FANCM and FAAP24. Interacts with FANCM.

Its subcellular location is the nucleus. In terms of biological role, plays a role in DNA repair through recruitment of the FA core complex to damaged DNA. Regulates FANCD2 monoubiquitination upon DNA damage. Induces chromosomal instability as well as hypersensitivity to DNA cross-linking agents, when repressed. Targets FANCM/FAAP24 complex to the DNA, preferentially to single strand DNA. This is Fanconi anemia core complex-associated protein 24 from Mus musculus (Mouse).